A 212-amino-acid chain; its full sequence is Non-structural protein 5 (212 aa).

Asp-86 contributes to the Mg(2+) binding site.

The protein belongs to the rotavirus NSP5 family. As to quaternary structure, homodimer. Interacts with VP1. Interacts with VP2. Interacts with NSP2 and NSP6. Mg(2+) is required as a cofactor. Post-translationally, O-glycosylated.

It localises to the host cytoplasm. In terms of biological role, plays an essential role in the viral genome replication. Participates, together with NSP2, in the formation of viral factories (viroplasms) which are large inclusions in the host cytoplasm where replication intermediates are assembled and viral RNA replication takes place. Orchestrates the recruitment of viroplasmic proteins such as capsid proteins to these factories. This chain is Non-structural protein 5, found in Homo sapiens (Human).